We begin with the raw amino-acid sequence, 122 residues long: Large ribosomal subunit protein eL34 (122 aa).

Belongs to the eukaryotic ribosomal protein eL34 family. In terms of assembly, component of the large ribosomal subunit. Mature ribosomes consist of a small (40S) and a large (60S) subunit. The 40S subunit contains about 32 different proteins and 1 molecule of RNA (18S). The 60S subunit contains 45 different proteins and 3 molecules of RNA (25S, 5.8S and 5S).

Its subcellular location is the cytoplasm. In terms of biological role, component of the ribosome, a large ribonucleoprotein complex responsible for the synthesis of proteins in the cell. The small ribosomal subunit (SSU) binds messenger RNAs (mRNAs) and translates the encoded message by selecting cognate aminoacyl-transfer RNA (tRNA) molecules. The large subunit (LSU) contains the ribosomal catalytic site termed the peptidyl transferase center (PTC), which catalyzes the formation of peptide bonds, thereby polymerizing the amino acids delivered by tRNAs into a polypeptide chain. The nascent polypeptides leave the ribosome through a tunnel in the LSU and interact with protein factors that function in enzymatic processing, targeting, and the membrane insertion of nascent chains at the exit of the ribosomal tunnel. The polypeptide is Large ribosomal subunit protein eL34 (Candida albicans (strain SC5314 / ATCC MYA-2876) (Yeast)).